Here is a 207-residue protein sequence, read N- to C-terminus: Holliday junction branch migration complex subunit RuvA (207 aa).

The domain I stretch occupies residues 1–65 (MYDYIRGTLT…ETEHLLYGFH (65 aa)). Residues 66 to 144 (SREERECFRI…DLLPLDSRVE (79 aa)) are domain II. The interval 145–150 (TSQTHT) is flexible linker. A domain III region spans residues 150–207 (TTSSCLEEGIQALAALGYSKIAAERMIAEAIKDLPEGSSLTDILPIALKKNFSGVNKD).

This sequence belongs to the RuvA family. Homotetramer. Forms an RuvA(8)-RuvB(12)-Holliday junction (HJ) complex. HJ DNA is sandwiched between 2 RuvA tetramers; dsDNA enters through RuvA and exits via RuvB. An RuvB hexamer assembles on each DNA strand where it exits the tetramer. Each RuvB hexamer is contacted by two RuvA subunits (via domain III) on 2 adjacent RuvB subunits; this complex drives branch migration. In the full resolvosome a probable DNA-RuvA(4)-RuvB(12)-RuvC(2) complex forms which resolves the HJ.

It is found in the cytoplasm. In terms of biological role, the RuvA-RuvB-RuvC complex processes Holliday junction (HJ) DNA during genetic recombination and DNA repair, while the RuvA-RuvB complex plays an important role in the rescue of blocked DNA replication forks via replication fork reversal (RFR). RuvA specifically binds to HJ cruciform DNA, conferring on it an open structure. The RuvB hexamer acts as an ATP-dependent pump, pulling dsDNA into and through the RuvAB complex. HJ branch migration allows RuvC to scan DNA until it finds its consensus sequence, where it cleaves and resolves the cruciform DNA. The sequence is that of Holliday junction branch migration complex subunit RuvA from Chlamydia pneumoniae (Chlamydophila pneumoniae).